Consider the following 101-residue polypeptide: Small ribosomal subunit protein uS10 (101 aa).

This sequence belongs to the universal ribosomal protein uS10 family. In terms of assembly, part of the 30S ribosomal subunit.

In terms of biological role, involved in the binding of tRNA to the ribosomes. This Porphyromonas gingivalis (strain ATCC 33277 / DSM 20709 / CIP 103683 / JCM 12257 / NCTC 11834 / 2561) protein is Small ribosomal subunit protein uS10.